The sequence spans 75 residues: Putative defensin-like protein 126 (75 aa).

A signal peptide spans 1 to 24 (MSKSTFLFVYIILILGSMVNEIQG). 4 disulfide bridges follow: C29-C73, C38-C57, C43-C67, and C47-C69.

It belongs to the DEFL family.

It localises to the secreted. The chain is Putative defensin-like protein 126 (LCR6) from Arabidopsis thaliana (Mouse-ear cress).